Consider the following 492-residue polypeptide: Bifunctional purine biosynthesis protein PurH (492 aa).

An MGS-like domain is found at 1–144 (MKKAILSVSN…KNYKHVTTIV (144 aa)).

The protein belongs to the PurH family.

The catalysed reaction is (6R)-10-formyltetrahydrofolate + 5-amino-1-(5-phospho-beta-D-ribosyl)imidazole-4-carboxamide = 5-formamido-1-(5-phospho-D-ribosyl)imidazole-4-carboxamide + (6S)-5,6,7,8-tetrahydrofolate. It carries out the reaction IMP + H2O = 5-formamido-1-(5-phospho-D-ribosyl)imidazole-4-carboxamide. The protein operates within purine metabolism; IMP biosynthesis via de novo pathway; 5-formamido-1-(5-phospho-D-ribosyl)imidazole-4-carboxamide from 5-amino-1-(5-phospho-D-ribosyl)imidazole-4-carboxamide (10-formyl THF route): step 1/1. It participates in purine metabolism; IMP biosynthesis via de novo pathway; IMP from 5-formamido-1-(5-phospho-D-ribosyl)imidazole-4-carboxamide: step 1/1. The sequence is that of Bifunctional purine biosynthesis protein PurH from Staphylococcus aureus (strain JH1).